Consider the following 165-residue polypeptide: Large ribosomal subunit protein uL10 (165 aa).

This sequence belongs to the universal ribosomal protein uL10 family. Part of the ribosomal stalk of the 50S ribosomal subunit. The N-terminus interacts with L11 and the large rRNA to form the base of the stalk. The C-terminus forms an elongated spine to which L12 dimers bind in a sequential fashion forming a multimeric L10(L12)X complex.

Functionally, forms part of the ribosomal stalk, playing a central role in the interaction of the ribosome with GTP-bound translation factors. This is Large ribosomal subunit protein uL10 from Pectobacterium atrosepticum (strain SCRI 1043 / ATCC BAA-672) (Erwinia carotovora subsp. atroseptica).